Reading from the N-terminus, the 122-residue chain is Cofilin-5 (122 aa).

One can recognise an ADF-H domain in the interval 3-122 (SRIIEIDPNC…VKDLIQLSNL (120 aa)).

The protein belongs to the actin-binding proteins ADF family.

It is found in the cytoplasm. The protein resides in the cytoskeleton. Functionally, controls actin polymerization and depolymerization. The sequence is that of Cofilin-5 (cofF) from Dictyostelium discoideum (Social amoeba).